The chain runs to 88 residues: Small ribosomal subunit protein bS20 (88 aa).

Belongs to the bacterial ribosomal protein bS20 family.

Binds directly to 16S ribosomal RNA. In Natranaerobius thermophilus (strain ATCC BAA-1301 / DSM 18059 / JW/NM-WN-LF), this protein is Small ribosomal subunit protein bS20.